A 101-amino-acid chain; its full sequence is Urease subunit beta (101 aa).

This sequence belongs to the urease beta subunit family. In terms of assembly, heterotrimer of UreA (gamma), UreB (beta) and UreC (alpha) subunits. Three heterotrimers associate to form the active enzyme.

The protein resides in the cytoplasm. The enzyme catalyses urea + 2 H2O + H(+) = hydrogencarbonate + 2 NH4(+). It functions in the pathway nitrogen metabolism; urea degradation; CO(2) and NH(3) from urea (urease route): step 1/1. The sequence is that of Urease subunit beta from Ectopseudomonas mendocina (strain ymp) (Pseudomonas mendocina).